The primary structure comprises 971 residues: Unconventional myosin-XIX (971 aa).

The tract at residues 1–25 (MSRPLSKNTEREPKQINGHQNNLSN) is disordered. The 708-residue stretch at 48 to 755 (HLYDDLTKVN…MVELLEERRL (708 aa)) folds into the Myosin motor domain. Position 145–152 (145–152 (GESGAGKT)) interacts with ATP. The actin-binding stretch occupies residues 611 to 633 (LESLMQILHSTTPHYIRCIKPNV). IQ domains are found at residues 758–787 (ISSKAMCIQCCWRSYRQRKLAKQSKAATTI) and 780–809 (QSKAATTIQAAVKGWLTKKYIKRMHSAATV). The segment at 826-971 (AAELDDSTED…FNEILLEKTV (146 aa)) is myMOMA region.

Belongs to the TRAFAC class myosin-kinesin ATPase superfamily. Myosin family. In terms of assembly, myosin is a hexamer of 2 heavy chains and 4 light chains.

Its subcellular location is the mitochondrion outer membrane. The protein resides in the cytoplasm. It is found in the cytoskeleton. Actin-based motor molecule with ATPase activity that localizes to the mitochondrion outer membrane. Motor protein that moves towards the plus-end of actin filaments. Required for mitochondrial inheritance during mitosis. May be involved in mitochondrial transport or positioning. The chain is Unconventional myosin-XIX from Xenopus laevis (African clawed frog).